Consider the following 142-residue polypeptide: Putative pre-16S rRNA nuclease (142 aa).

This sequence belongs to the YqgF nuclease family.

The protein resides in the cytoplasm. Functionally, could be a nuclease involved in processing of the 5'-end of pre-16S rRNA. The chain is Putative pre-16S rRNA nuclease from Nitratidesulfovibrio vulgaris (strain DP4) (Desulfovibrio vulgaris).